A 147-amino-acid polypeptide reads, in one-letter code: Flagellar assembly factor FliW (147 aa).

It belongs to the FliW family. In terms of assembly, interacts with translational regulator CsrA and flagellin(s).

It is found in the cytoplasm. Functionally, acts as an anti-CsrA protein, binds CsrA and prevents it from repressing translation of its target genes, one of which is flagellin. Binds to flagellin and participates in the assembly of the flagellum. This is Flagellar assembly factor FliW from Oceanobacillus iheyensis (strain DSM 14371 / CIP 107618 / JCM 11309 / KCTC 3954 / HTE831).